The sequence spans 87 residues: Phosphocarrier protein HPr (87 aa).

Residues 2–87 form the HPr domain; sequence ASKDFHIVAE…NETMTKEGLA (86 aa). The active-site Pros-phosphohistidine intermediate is H15. At S46 the chain carries Phosphoserine; by HPrK/P.

Belongs to the HPr family.

It is found in the cytoplasm. Phosphorylation on Ser-46 inhibits the phosphoryl transfer from enzyme I to HPr. Functionally, general (non sugar-specific) component of the phosphoenolpyruvate-dependent sugar phosphotransferase system (sugar PTS). This major carbohydrate active-transport system catalyzes the phosphorylation of incoming sugar substrates concomitantly with their translocation across the cell membrane. The phosphoryl group from phosphoenolpyruvate (PEP) is transferred to the phosphoryl carrier protein HPr by enzyme I. Phospho-HPr then transfers it to the PTS EIIA domain. P-Ser-HPr interacts with the catabolite control protein A (CcpA), forming a complex that binds to DNA at the catabolite response elements cre, operator sites preceding a large number of catabolite-regulated genes. Thus, P-Ser-HPr is a corepressor in carbon catabolite repression (CCR), a mechanism that allows bacteria to coordinate and optimize the utilization of available carbon sources. P-Ser-HPr also plays a role in inducer exclusion, in which it probably interacts with several non-PTS permeases and inhibits their transport activity. This is Phosphocarrier protein HPr (ptsH) from Streptococcus mutans serotype c (strain ATCC 700610 / UA159).